Here is a 168-residue protein sequence, read N- to C-terminus: N-alpha-acetyltransferase 50 (168 aa).

The N-acetyltransferase domain maps to 5–154; that stretch reads IELGDVTPHN…DAHVLQKSLR (150 aa). Tyr-30 contacts substrate. Tyr-72 is an active-site residue. Met-74 contacts substrate. 76–89 is an acetyl-CoA binding site; sequence LGCLAPYRRLGIGT. His-111 is a catalytic residue. 116-125 lines the CoA pocket; the sequence is NESAIDFYQK. Residues 137–140 form a substrate region; the sequence is YYKR.

It belongs to the acetyltransferase family. GNAT subfamily. In terms of assembly, interacts with naa35.

The protein resides in the cytoplasm. The protein localises to the nucleus. It catalyses the reaction N-terminal L-methionyl-L-alanyl-[protein] + acetyl-CoA = N-terminal N(alpha)-acetyl-L-methionyl-L-alanyl-[protein] + CoA + H(+). It carries out the reaction N-terminal L-methionyl-L-seryl-[protein] + acetyl-CoA = N-terminal N(alpha)-acetyl-L-methionyl-L-seryl-[protein] + CoA + H(+). The catalysed reaction is N-terminal L-methionyl-L-valyl-[protein] + acetyl-CoA = N-terminal N(alpha)-acetyl-L-methionyl-L-valyl-[protein] + CoA + H(+). The enzyme catalyses N-terminal L-methionyl-L-threonyl-[protein] + acetyl-CoA = N-terminal N(alpha)-acetyl-L-methionyl-L-threonyl-[protein] + CoA + H(+). It catalyses the reaction N-terminal L-methionyl-L-lysyl-[protein] + acetyl-CoA = N-terminal N(alpha)-acetyl-L-methionyl-L-lysyl-[protein] + CoA + H(+). It carries out the reaction N-terminal L-methionyl-L-leucyl-[protein] + acetyl-CoA = N-terminal N(alpha)-acetyl-L-methionyl-L-leucyl-[protein] + CoA + H(+). The catalysed reaction is N-terminal L-methionyl-L-phenylalanyl-[protein] + acetyl-CoA = N-terminal N(alpha)-acetyl-L-methionyl-L-phenylalanyl-[protein] + CoA + H(+). The enzyme catalyses N-terminal L-methionyl-L-tyrosyl-[protein] + acetyl-CoA = N-terminal N(alpha)-acetyl-L-methionyl-L-tyrosyl-[protein] + CoA + H(+). Its function is as follows. N-alpha-acetyltransferase that acetylates the N-terminus of proteins that retain their initiating methionine. Has a broad substrate specificity: able to acetylate the initiator methionine of most peptides, except for those with a proline in second position. Also displays N-epsilon-acetyltransferase activity by mediating acetylation of the side chain of specific lysines on proteins. The relevance of N-epsilon-acetyltransferase activity is however unclear. Required for sister chromatid cohesion during mitosis by promoting binding of CDCA5/sororin to cohesin. Essential in embryonic cell proliferation and survival. The protein is N-alpha-acetyltransferase 50 (naa50) of Danio rerio (Zebrafish).